Reading from the N-terminus, the 208-residue chain is Pyridoxine/pyridoxamine 5'-phosphate oxidase (208 aa).

FMN-binding positions include 55 to 60, 70 to 71, lysine 76, lysine 77, and glutamine 99; these read RMVLLK and YT. Lysine 60 contacts substrate. Substrate contacts are provided by tyrosine 117, arginine 121, and serine 125. Residues 134–135 and tryptophan 179 contribute to the FMN site; that span reads QS. 185–187 serves as a coordination point for substrate; it reads RLH. Arginine 189 contributes to the FMN binding site.

The protein belongs to the pyridoxamine 5'-phosphate oxidase family. Homodimer. The cofactor is FMN.

The catalysed reaction is pyridoxamine 5'-phosphate + O2 + H2O = pyridoxal 5'-phosphate + H2O2 + NH4(+). It catalyses the reaction pyridoxine 5'-phosphate + O2 = pyridoxal 5'-phosphate + H2O2. It functions in the pathway cofactor metabolism; pyridoxal 5'-phosphate salvage; pyridoxal 5'-phosphate from pyridoxamine 5'-phosphate: step 1/1. It participates in cofactor metabolism; pyridoxal 5'-phosphate salvage; pyridoxal 5'-phosphate from pyridoxine 5'-phosphate: step 1/1. Its function is as follows. Catalyzes the oxidation of either pyridoxine 5'-phosphate (PNP) or pyridoxamine 5'-phosphate (PMP) into pyridoxal 5'-phosphate (PLP). This chain is Pyridoxine/pyridoxamine 5'-phosphate oxidase, found in Brucella abortus biovar 1 (strain 9-941).